Reading from the N-terminus, the 138-residue chain is Proofreading thioesterase EntH (138 aa).

The active-site Nucleophile or proton acceptor is the E64.

The protein belongs to the thioesterase PaaI family. As to quaternary structure, homotetramer. Dimer of dimers. Interacts specifically with the aryl carrier protein (ArCP) domain of EntB.

It localises to the cytoplasm. It functions in the pathway siderophore biosynthesis; enterobactin biosynthesis. Functionally, required for optimal enterobactin synthesis. Acts as a proofreading enzyme that prevents EntB misacylation by hydrolyzing the thioester bound existing between EntB and wrongly charged molecules. The polypeptide is Proofreading thioesterase EntH (Salmonella arizonae (strain ATCC BAA-731 / CDC346-86 / RSK2980)).